The chain runs to 286 residues: Phosphatidylglycerol--prolipoprotein diacylglyceryl transferase (286 aa).

7 consecutive transmembrane segments (helical) span residues isoleucine 29–tyrosine 49, leucine 66–tyrosine 86, valine 101–leucine 121, phenylalanine 130–isoleucine 150, proline 181–phenylalanine 201, alanine 209–valine 229, and leucine 250–alanine 270. An a 1,2-diacyl-sn-glycero-3-phospho-(1'-sn-glycerol)-binding site is contributed by arginine 149.

Belongs to the Lgt family.

It is found in the cell inner membrane. The enzyme catalyses L-cysteinyl-[prolipoprotein] + a 1,2-diacyl-sn-glycero-3-phospho-(1'-sn-glycerol) = an S-1,2-diacyl-sn-glyceryl-L-cysteinyl-[prolipoprotein] + sn-glycerol 1-phosphate + H(+). The protein operates within protein modification; lipoprotein biosynthesis (diacylglyceryl transfer). Its function is as follows. Catalyzes the transfer of the diacylglyceryl group from phosphatidylglycerol to the sulfhydryl group of the N-terminal cysteine of a prolipoprotein, the first step in the formation of mature lipoproteins. The protein is Phosphatidylglycerol--prolipoprotein diacylglyceryl transferase of Teredinibacter turnerae (strain ATCC 39867 / T7901).